Here is a 207-residue protein sequence, read N- to C-terminus: Cytochrome c biogenesis ATP-binding export protein CcmA (207 aa).

In terms of domain architecture, ABC transporter spans 4 to 207 (LEARELLCER…RISLTQTRAA (204 aa)). 36–43 (GSNGAGKT) is an ATP binding site.

It belongs to the ABC transporter superfamily. CcmA exporter (TC 3.A.1.107) family. In terms of assembly, the complex is composed of two ATP-binding proteins (CcmA) and two transmembrane proteins (CcmB).

It localises to the cell inner membrane. It carries out the reaction heme b(in) + ATP + H2O = heme b(out) + ADP + phosphate + H(+). Its function is as follows. Part of the ABC transporter complex CcmAB involved in the biogenesis of c-type cytochromes; once thought to export heme, this seems not to be the case, but its exact role is uncertain. Responsible for energy coupling to the transport system. This chain is Cytochrome c biogenesis ATP-binding export protein CcmA, found in Shigella sonnei (strain Ss046).